We begin with the raw amino-acid sequence, 1402 residues long: Defective in tip formation protein A (1402 aa).

Disordered regions lie at residues Met1–Ile20, Asn37–Val94, Asn109–Ile133, and Lys210–Lys292. Repeat copies occupy residues Thr12–Pro18 and Thr40–Pro46. The segment at Thr12–Gln92 is 4 X 7 AA repeat of T-T-T-[IV]-[AQ]-P-P. A compositionally biased stretch (low complexity) spans Val38–Gln47. Over residues Ile48–Pro58 the composition is skewed to pro residues. Low complexity predominate over residues Gln59–Val94. Repeat copies occupy residues Thr60–Pro66 and Thr86–Gln92. The span at Lys210 to Lys234 shows a compositional bias: low complexity. Pro residues predominate over residues Gln235–Leu253. Over residues Leu254–Gln279 the composition is skewed to low complexity. Positions Gln350–Lys383 form a coiled coil. Disordered regions lie at residues Asp429 to Thr453 and Asn712 to Asn745. A compositionally biased stretch (low complexity) spans Gln430–Thr453.

Its subcellular location is the cell surface. In terms of biological role, required for correct organization of the actin cytoskeleton and cytokinesis. Also required for apical sorting of prestalk cells, a prerequisite for formation of the tip at the mound stage and subsequent formation of the fruiting body. May be required for cell adhesion. In Dictyostelium discoideum (Social amoeba), this protein is Defective in tip formation protein A (dtfA).